The chain runs to 499 residues: Basic immunoglobulin-like variable motif-containing protein (499 aa).

3 disordered regions span residues 1–29 (MPNI…RNNL), 153–172 (LKSR…ERKA), and 428–465 (GNLR…RSFS). A compositionally biased stretch (polar residues) spans 153–162 (LKSRSGVNKQ). Residues 444–453 (PKSESEDNVS) are compositionally biased toward basic and acidic residues.

This sequence belongs to the BIVM family.

Its subcellular location is the cytoplasm. The protein localises to the nucleus. The chain is Basic immunoglobulin-like variable motif-containing protein (bivm) from Xenopus tropicalis (Western clawed frog).